A 193-amino-acid chain; its full sequence is Probable nicotinate-nucleotide adenylyltransferase (193 aa).

The protein belongs to the NadD family.

The enzyme catalyses nicotinate beta-D-ribonucleotide + ATP + H(+) = deamido-NAD(+) + diphosphate. Its pathway is cofactor biosynthesis; NAD(+) biosynthesis; deamido-NAD(+) from nicotinate D-ribonucleotide: step 1/1. In terms of biological role, catalyzes the reversible adenylation of nicotinate mononucleotide (NaMN) to nicotinic acid adenine dinucleotide (NaAD). This is Probable nicotinate-nucleotide adenylyltransferase from Borreliella afzelii (strain PKo) (Borrelia afzelii).